The chain runs to 427 residues: Trigger factor (427 aa).

The PPIase FKBP-type domain maps to 163 to 248 (GDTVVIDFVG…IHEVKEKEVP (86 aa)).

This sequence belongs to the FKBP-type PPIase family. Tig subfamily.

It is found in the cytoplasm. It catalyses the reaction [protein]-peptidylproline (omega=180) = [protein]-peptidylproline (omega=0). Functionally, involved in protein export. Acts as a chaperone by maintaining the newly synthesized protein in an open conformation. Functions as a peptidyl-prolyl cis-trans isomerase. In Streptococcus sanguinis (strain SK36), this protein is Trigger factor.